Here is a 254-residue protein sequence, read N- to C-terminus: Ribosomal RNA small subunit methyltransferase G (254 aa).

The segment at 1 to 21 is disordered; sequence MPEGDGVPRETPSPSVVPESP. A compositionally biased stretch (low complexity) spans 9 to 21; it reads RETPSPSVVPESP. Residues Gly-90, Leu-95, 142 to 143, and Arg-157 each bind S-adenosyl-L-methionine; that span reads AE. Residues 230 to 254 are disordered; that stretch reads GPLRAATAPAPPGAAKRRPGKGNRR. Positions 244-254 are enriched in basic residues; sequence AKRRPGKGNRR.

This sequence belongs to the methyltransferase superfamily. RNA methyltransferase RsmG family.

The protein localises to the cytoplasm. Specifically methylates the N7 position of guanine in position 518 of 16S rRNA. The sequence is that of Ribosomal RNA small subunit methyltransferase G from Kineococcus radiotolerans (strain ATCC BAA-149 / DSM 14245 / SRS30216).